Reading from the N-terminus, the 196-residue chain is Pyridoxal 5'-phosphate synthase subunit PdxT (196 aa).

Residue 47–49 (GES) participates in L-glutamine binding. Cysteine 79 serves as the catalytic Nucleophile. L-glutamine contacts are provided by residues arginine 106 and 134-135 (IR). Catalysis depends on charge relay system residues histidine 170 and glutamate 172.

The protein belongs to the glutaminase PdxT/SNO family. As to quaternary structure, in the presence of PdxS, forms a dodecamer of heterodimers. Only shows activity in the heterodimer.

It catalyses the reaction aldehydo-D-ribose 5-phosphate + D-glyceraldehyde 3-phosphate + L-glutamine = pyridoxal 5'-phosphate + L-glutamate + phosphate + 3 H2O + H(+). The catalysed reaction is L-glutamine + H2O = L-glutamate + NH4(+). It participates in cofactor biosynthesis; pyridoxal 5'-phosphate biosynthesis. Catalyzes the hydrolysis of glutamine to glutamate and ammonia as part of the biosynthesis of pyridoxal 5'-phosphate. The resulting ammonia molecule is channeled to the active site of PdxS. This Bacillus cereus (strain G9842) protein is Pyridoxal 5'-phosphate synthase subunit PdxT.